A 479-amino-acid chain; its full sequence is Chromosomal replication initiator protein DnaA (479 aa).

Residues 1 to 94 (MKGGTMVENA…QTLWRTERED (94 aa)) form a domain I, interacts with DnaA modulators region. The tract at residues 94 to 142 (DIKGVELQVKRGLPEVSMGDAEDGEDGSGEGHELATQAAAPESRSDLAV) is domain II. Residues 106-137 (LPEVSMGDAEDGEDGSGEGHELATQAAAPESR) form a disordered region. A domain III, AAA+ region region spans residues 143–359 (PLDPRFTFDT…GALNRLIAHA (217 aa)). Residues glycine 188, glycine 190, lysine 191, and threonine 192 each coordinate ATP. Positions 360–479 (DLVGRPVTLD…VELLRRMLEG (120 aa)) are domain IV, binds dsDNA.

Belongs to the DnaA family. As to quaternary structure, oligomerizes as a right-handed, spiral filament on DNA at oriC.

It is found in the cytoplasm. In terms of biological role, plays an essential role in the initiation and regulation of chromosomal replication. ATP-DnaA binds to the origin of replication (oriC) to initiate formation of the DNA replication initiation complex once per cell cycle. Binds the DnaA box (a 9 base pair repeat at the origin) and separates the double-stranded (ds)DNA. Forms a right-handed helical filament on oriC DNA; dsDNA binds to the exterior of the filament while single-stranded (ss)DNA is stabiized in the filament's interior. The ATP-DnaA-oriC complex binds and stabilizes one strand of the AT-rich DNA unwinding element (DUE), permitting loading of DNA polymerase. After initiation quickly degrades to an ADP-DnaA complex that is not apt for DNA replication. Binds acidic phospholipids. The chain is Chromosomal replication initiator protein DnaA from Gluconobacter oxydans (strain 621H) (Gluconobacter suboxydans).